The following is a 430-amino-acid chain: Nacrein-like protein P2 (430 aa).

N-linked (GlcNAc...) asparagine glycosylation occurs at Asn27. The 397-residue stretch at 33–429 folds into the Alpha-carbonic anhydrase domain; sequence AGFSYDRSIC…KNKVTVYKSF (397 aa). Zn(2+)-binding residues include His132, His134, and His157. The interval 201–312 is disordered; it reads DEPDDEECKR…GENGHKHGCR (112 aa). Residues 207–219 show a composition bias toward basic and acidic residues; that stretch reads ECKRILKGHHPDN. The segment covering 220-304 has biased composition (low complexity); that stretch reads NENGNGDNGN…NNGENGNNGE (85 aa). 27 tandem repeats follow at residues 225–227, 228–230, 231–233, 234–236, 237–239, 240–242, 243–245, 246–248, 249–251, 252–254, 255–257, 258–260, 261–263, 264–266, 267–269, 270–272, 273–275, 276–278, 279–281, 282–284, 285–287, 288–290, 291–293, 294–296, 297–299, 300–301, and 303–305. The 27 X 3 AA approximate tandem repeats of G-X-N stretch occupies residues 225-305; sequence GDNGNNGYNG…NGENGNNGEN (81 aa). Residue 370 to 371 coordinates substrate; it reads TT.

This sequence belongs to the alpha-carbonic anhydrase family. In terms of assembly, homooligomer; disulfide-linked. May also be disulfide-linked to insoluble organic matrix. Zn(2+) serves as cofactor. As to expression, expressed in the mantle.

It localises to the secreted. Its subcellular location is the extracellular space. It is found in the extracellular matrix. It catalyses the reaction hydrogencarbonate + H(+) = CO2 + H2O. Functionally, acts as a negative regulator for calcification in the shells of mollusks. May function both as a calcium concentrator and as a carbonic anhydrase required for production of carbonate ions, which are assembled to CaCO(3) at mineralization sites. Is important for shell formation in both the calcitic prismatic layer and the aragonitic nacreous layer. Shows inhibitory activity of crystal formation when present in free state but, when attached to the insoluble matrix, may regulate the form and size of aragonite crystal. The polypeptide is Nacrein-like protein P2 (Mizuhopecten yessoensis (Japanese scallop)).